Consider the following 294-residue polypeptide: tRNA dimethylallyltransferase (294 aa).

Gly-10–Thr-17 contacts ATP. Thr-12–Thr-17 lines the substrate pocket. Positions Asp-35–Gln-38 are interaction with substrate tRNA.

This sequence belongs to the IPP transferase family. As to quaternary structure, monomer. The cofactor is Mg(2+).

It catalyses the reaction adenosine(37) in tRNA + dimethylallyl diphosphate = N(6)-dimethylallyladenosine(37) in tRNA + diphosphate. Catalyzes the transfer of a dimethylallyl group onto the adenine at position 37 in tRNAs that read codons beginning with uridine, leading to the formation of N6-(dimethylallyl)adenosine (i(6)A). The sequence is that of tRNA dimethylallyltransferase from Streptococcus pneumoniae serotype 2 (strain D39 / NCTC 7466).